We begin with the raw amino-acid sequence, 299 residues long: Ribosomal RNA small subunit methyltransferase H (299 aa).

Residues 32-34, Asp52, Phe79, Asp100, and Gln107 each bind S-adenosyl-L-methionine; that span reads AGH.

This sequence belongs to the methyltransferase superfamily. RsmH family.

The protein localises to the cytoplasm. It catalyses the reaction cytidine(1402) in 16S rRNA + S-adenosyl-L-methionine = N(4)-methylcytidine(1402) in 16S rRNA + S-adenosyl-L-homocysteine + H(+). In terms of biological role, specifically methylates the N4 position of cytidine in position 1402 (C1402) of 16S rRNA. This is Ribosomal RNA small subunit methyltransferase H from Mycoplasmopsis pulmonis (strain UAB CTIP) (Mycoplasma pulmonis).